A 244-amino-acid chain; its full sequence is Uridylate kinase (244 aa).

Residue 15–18 (KLSG) participates in ATP binding. Residues 23–28 (GSEGFG) form an involved in allosteric activation by GTP region. Residue Gly57 participates in UMP binding. ATP-binding residues include Gly58 and Arg62. UMP contacts are provided by residues Asp77 and 138–145 (TGNPFFTT). Positions 165, 171, and 174 each coordinate ATP.

Belongs to the UMP kinase family. As to quaternary structure, homohexamer.

The protein localises to the cytoplasm. It carries out the reaction UMP + ATP = UDP + ADP. It participates in pyrimidine metabolism; CTP biosynthesis via de novo pathway; UDP from UMP (UMPK route): step 1/1. Allosterically activated by GTP. Inhibited by UTP. Catalyzes the reversible phosphorylation of UMP to UDP. The sequence is that of Uridylate kinase from Aeromonas hydrophila subsp. hydrophila (strain ATCC 7966 / DSM 30187 / BCRC 13018 / CCUG 14551 / JCM 1027 / KCTC 2358 / NCIMB 9240 / NCTC 8049).